We begin with the raw amino-acid sequence, 305 residues long: Glycine--tRNA ligase alpha subunit (305 aa).

This sequence belongs to the class-II aminoacyl-tRNA synthetase family. In terms of assembly, tetramer of two alpha and two beta subunits.

It localises to the cytoplasm. The enzyme catalyses tRNA(Gly) + glycine + ATP = glycyl-tRNA(Gly) + AMP + diphosphate. The protein is Glycine--tRNA ligase alpha subunit of Vibrio parahaemolyticus serotype O3:K6 (strain RIMD 2210633).